Consider the following 564-residue polypeptide: CTP synthase (564 aa).

Positions 1–265 (MTKFVFVTGG…DEIVCHRLGI (265 aa)) are amidoligase domain. A CTP-binding site is contributed by S13. Residue S13 coordinates UTP. ATP-binding positions include 14-19 (SLGKGI) and D71. D71 and E139 together coordinate Mg(2+). CTP-binding positions include 146–148 (DIE), 186–191 (KTKPTQ), and K222. UTP contacts are provided by residues 186-191 (KTKPTQ) and K222. A Glutamine amidotransferase type-1 domain is found at 290–543 (SIALVGKYVD…VRAAISFADK (254 aa)). Position 351 (G351) interacts with L-glutamine. The active-site Nucleophile; for glutamine hydrolysis is the C378. L-glutamine-binding positions include 379–382 (LGMQ), E402, and R469. Residues H516 and E518 contribute to the active site.

It belongs to the CTP synthase family. As to quaternary structure, homotetramer.

It catalyses the reaction UTP + L-glutamine + ATP + H2O = CTP + L-glutamate + ADP + phosphate + 2 H(+). It carries out the reaction L-glutamine + H2O = L-glutamate + NH4(+). The catalysed reaction is UTP + NH4(+) + ATP = CTP + ADP + phosphate + 2 H(+). It functions in the pathway pyrimidine metabolism; CTP biosynthesis via de novo pathway; CTP from UDP: step 2/2. With respect to regulation, allosterically activated by GTP, when glutamine is the substrate; GTP has no effect on the reaction when ammonia is the substrate. The allosteric effector GTP functions by stabilizing the protein conformation that binds the tetrahedral intermediate(s) formed during glutamine hydrolysis. Inhibited by the product CTP, via allosteric rather than competitive inhibition. Catalyzes the ATP-dependent amination of UTP to CTP with either L-glutamine or ammonia as the source of nitrogen. Regulates intracellular CTP levels through interactions with the four ribonucleotide triphosphates. The chain is CTP synthase from Nitrosomonas eutropha (strain DSM 101675 / C91 / Nm57).